The sequence spans 368 residues: tRNA-specific 2-thiouridylase MnmA (368 aa).

ATP is bound by residues 11–18 (GMSGGVDS) and methionine 37. The segment at 97–99 (NPD) is interaction with target base in tRNA. Residue cysteine 102 is the Nucleophile of the active site. Cysteine 102 and cysteine 199 are oxidised to a cystine. Glycine 127 contacts ATP. The interaction with tRNA stretch occupies residues 149–151 (KDQ). The active-site Cysteine persulfide intermediate is the cysteine 199. The interaction with tRNA stretch occupies residues 311-312 (RY).

Belongs to the MnmA/TRMU family. In terms of assembly, interacts with TusE.

The protein resides in the cytoplasm. It catalyses the reaction S-sulfanyl-L-cysteinyl-[protein] + uridine(34) in tRNA + AH2 + ATP = 2-thiouridine(34) in tRNA + L-cysteinyl-[protein] + A + AMP + diphosphate + H(+). Its function is as follows. Catalyzes the 2-thiolation of uridine at the wobble position (U34) of tRNA(Lys), tRNA(Glu) and tRNA(Gln), leading to the formation of s(2)U34, the first step of tRNA-mnm(5)s(2)U34 synthesis. Sulfur is provided by IscS, via a sulfur-relay system. Binds ATP and its substrate tRNAs. The polypeptide is tRNA-specific 2-thiouridylase MnmA (Shigella dysenteriae serotype 1 (strain Sd197)).